Consider the following 159-residue polypeptide: MIILGIDPSLVSTGWGVISISGSIVNYIDSGVIKTVSKDSLVLKLGNISLMIEKLITRFNPFHVAMEEVFINKNYSSSVTLIQARGAIMSVIGRYNIDFSEYAPNKIKKAIVGAGKAEKHQVQQMVKLLMHIKKAISKDESDALATAYTASVNHQIKII.

Catalysis depends on residues Asp7, Glu67, and Asp139. Residues Asp7, Glu67, and Asp139 each coordinate Mg(2+).

This sequence belongs to the RuvC family. Homodimer which binds Holliday junction (HJ) DNA. The HJ becomes 2-fold symmetrical on binding to RuvC with unstacked arms; it has a different conformation from HJ DNA in complex with RuvA. In the full resolvosome a probable DNA-RuvA(4)-RuvB(12)-RuvC(2) complex forms which resolves the HJ. Mg(2+) is required as a cofactor.

It is found in the cytoplasm. It catalyses the reaction Endonucleolytic cleavage at a junction such as a reciprocal single-stranded crossover between two homologous DNA duplexes (Holliday junction).. Its function is as follows. The RuvA-RuvB-RuvC complex processes Holliday junction (HJ) DNA during genetic recombination and DNA repair. Endonuclease that resolves HJ intermediates. Cleaves cruciform DNA by making single-stranded nicks across the HJ at symmetrical positions within the homologous arms, yielding a 5'-phosphate and a 3'-hydroxyl group; requires a central core of homology in the junction. The consensus cleavage sequence is 5'-(A/T)TT(C/G)-3'. Cleavage occurs on the 3'-side of the TT dinucleotide at the point of strand exchange. HJ branch migration catalyzed by RuvA-RuvB allows RuvC to scan DNA until it finds its consensus sequence, where it cleaves and resolves the cruciform DNA. In Orientia tsutsugamushi (strain Ikeda) (Rickettsia tsutsugamushi), this protein is Crossover junction endodeoxyribonuclease RuvC.